A 475-amino-acid chain; its full sequence is Methylenetetrahydrofolate--tRNA-(uracil-5-)-methyltransferase TrmFO (475 aa).

13–18 (GAGLAG) lines the FAD pocket.

The protein belongs to the MnmG family. TrmFO subfamily. FAD serves as cofactor.

The protein resides in the cytoplasm. It carries out the reaction uridine(54) in tRNA + (6R)-5,10-methylene-5,6,7,8-tetrahydrofolate + NADH + H(+) = 5-methyluridine(54) in tRNA + (6S)-5,6,7,8-tetrahydrofolate + NAD(+). The enzyme catalyses uridine(54) in tRNA + (6R)-5,10-methylene-5,6,7,8-tetrahydrofolate + NADPH + H(+) = 5-methyluridine(54) in tRNA + (6S)-5,6,7,8-tetrahydrofolate + NADP(+). Functionally, catalyzes the folate-dependent formation of 5-methyl-uridine at position 54 (M-5-U54) in all tRNAs. This chain is Methylenetetrahydrofolate--tRNA-(uracil-5-)-methyltransferase TrmFO, found in Bradyrhizobium diazoefficiens (strain JCM 10833 / BCRC 13528 / IAM 13628 / NBRC 14792 / USDA 110).